The sequence spans 565 residues: Sulfite reductase [NADPH] hemoprotein beta-component (565 aa).

Cys429, Cys435, Cys474, and Cys478 together coordinate [4Fe-4S] cluster. Cys478 contacts siroheme.

It belongs to the nitrite and sulfite reductase 4Fe-4S domain family. Alpha(8)-beta(8). The alpha component is a flavoprotein, the beta component is a hemoprotein. It depends on siroheme as a cofactor. Requires [4Fe-4S] cluster as cofactor.

It catalyses the reaction hydrogen sulfide + 3 NADP(+) + 3 H2O = sulfite + 3 NADPH + 4 H(+). The protein operates within sulfur metabolism; hydrogen sulfide biosynthesis; hydrogen sulfide from sulfite (NADPH route): step 1/1. In terms of biological role, component of the sulfite reductase complex that catalyzes the 6-electron reduction of sulfite to sulfide. This is one of several activities required for the biosynthesis of L-cysteine from sulfate. The chain is Sulfite reductase [NADPH] hemoprotein beta-component from Shewanella putrefaciens (strain CN-32 / ATCC BAA-453).